The primary structure comprises 338 residues: Glycerol-3-phosphate dehydrogenase [NAD(P)+] (338 aa).

NADPH-binding residues include S13, W14, and K108. 3 residues coordinate sn-glycerol 3-phosphate: K108, G139, and S141. Residue A143 coordinates NADPH. Positions 194, 247, 257, 258, and 259 each coordinate sn-glycerol 3-phosphate. K194 serves as the catalytic Proton acceptor. Position 258 (R258) interacts with NADPH. NADPH-binding residues include V282 and E284.

The protein belongs to the NAD-dependent glycerol-3-phosphate dehydrogenase family.

Its subcellular location is the cytoplasm. The enzyme catalyses sn-glycerol 3-phosphate + NAD(+) = dihydroxyacetone phosphate + NADH + H(+). The catalysed reaction is sn-glycerol 3-phosphate + NADP(+) = dihydroxyacetone phosphate + NADPH + H(+). Its pathway is membrane lipid metabolism; glycerophospholipid metabolism. Catalyzes the reduction of the glycolytic intermediate dihydroxyacetone phosphate (DHAP) to sn-glycerol 3-phosphate (G3P), the key precursor for phospholipid synthesis. In Streptococcus gordonii (strain Challis / ATCC 35105 / BCRC 15272 / CH1 / DL1 / V288), this protein is Glycerol-3-phosphate dehydrogenase [NAD(P)+].